We begin with the raw amino-acid sequence, 215 residues long: Interleukin-12 subunit alpha (215 aa).

Residues 1–22 (MCSSRCLLFLATLAFLIHLSLA) form the signal peptide. 3 cysteine pairs are disulfide-bonded: cysteine 33/cysteine 106, cysteine 60/cysteine 192, and cysteine 81/cysteine 119. Residue asparagine 89 is glycosylated (N-linked (GlcNAc...) asparagine).

This sequence belongs to the IL-6 superfamily. In terms of assembly, heterodimer with IL12B; disulfide-linked. This heterodimer is known as interleukin IL-12. Heterodimer with EBI3/IL27B; not disulfide-linked. This heterodimer is known as interleukin IL-35. Interacts with NBR1; this interaction promotes IL-12 secretion.

The protein localises to the secreted. Heterodimerizes with IL12B to form the IL-12 cytokine or with EBI3/IL27B to form the IL-35 cytokine. IL-12 is primarily produced by professional antigen-presenting cells (APCs) such as B-cells and dendritic cells (DCs) as well as macrophages and granulocytes and regulates T-cell and natural killer-cell responses, induces the production of interferon-gamma (IFN-gamma), favors the differentiation of T-helper 1 (Th1) cells and is an important link between innate resistance and adaptive immunity. Mechanistically, exerts its biological effects through a receptor composed of IL12R1 and IL12R2 subunits. Binding to the receptor results in the rapid tyrosine phosphorylation of a number of cellular substrates including the JAK family kinases TYK2 and JAK2. In turn, recruited STAT4 gets phosphorylated and translocates to the nucleus where it regulates cytokine/growth factor responsive genes. As part of IL-35, plays essential roles in maintaining the immune homeostasis of the liver microenvironment and also functions as an immune-suppressive cytokine. Mediates biological events through unconventional receptors composed of IL12RB2 and gp130/IL6ST heterodimers or homodimers. Signaling requires the transcription factors STAT1 and STAT4, which form a unique heterodimer that binds to distinct DNA sites. In Sigmodon hispidus (Hispid cotton rat), this protein is Interleukin-12 subunit alpha (IL12A).